The sequence spans 244 residues: Octanoyltransferase (244 aa).

Residues 49-237 (VAPGNFLIFC…HLTALFELHI (189 aa)) enclose the BPL/LPL catalytic domain. Residues 94–101 (RGGDITYH), 167–169 (AMG), and 180–182 (GFA) each bind substrate. The active-site Acyl-thioester intermediate is the cysteine 198.

It belongs to the LipB family.

Its subcellular location is the cytoplasm. The enzyme catalyses octanoyl-[ACP] + L-lysyl-[protein] = N(6)-octanoyl-L-lysyl-[protein] + holo-[ACP] + H(+). Its pathway is protein modification; protein lipoylation via endogenous pathway; protein N(6)-(lipoyl)lysine from octanoyl-[acyl-carrier-protein]: step 1/2. Functionally, catalyzes the transfer of endogenously produced octanoic acid from octanoyl-acyl-carrier-protein onto the lipoyl domains of lipoate-dependent enzymes. Lipoyl-ACP can also act as a substrate although octanoyl-ACP is likely to be the physiological substrate. This is Octanoyltransferase from Cytophaga hutchinsonii (strain ATCC 33406 / DSM 1761 / CIP 103989 / NBRC 15051 / NCIMB 9469 / D465).